The following is a 215-amino-acid chain: Probable Rab-related GTPase (215 aa).

Gly20–Ser27 lines the GTP pocket. An Effector region motif is present at residues Val42 to Phe50. GTP contacts are provided by residues Asp69–Gln73 and Asn127–Asp130. 2 S-geranylgeranyl cysteine; by host lipidation sites follow: Cys211 and Cys212. Cysteine methyl ester; by host is present on Cys212. Residues Tyr213–Ser215 constitute a propeptide, removed in mature form.

It belongs to the small GTPase superfamily. Rab family.

The protein localises to the host cell membrane. In terms of biological role, may be involved in protein transport. The sequence is that of Probable Rab-related GTPase from Acanthamoeba polyphaga mimivirus (APMV).